The sequence spans 337 residues: Probable cytosolic iron-sulfur protein assembly protein CIAO1 homolog (337 aa).

WD repeat units follow at residues 15–54, 65–104, 109–148, 154–193, 199–238, 253–292, and 301–337; these read DDTS…DSKM, SHTR…FAEV, GHES…DFSV, PHTQ…WVTQ, CHVG…SKSA, NTRW…ESPV, and RHEL…ELEI.

The protein belongs to the WD repeat CIA1 family.

Functionally, essential component of the cytosolic iron-sulfur (Fe/S) protein assembly machinery. Required for the maturation of extramitochondrial Fe/S proteins. The chain is Probable cytosolic iron-sulfur protein assembly protein CIAO1 homolog from Caenorhabditis elegans.